The sequence spans 313 residues: Secretory carrier-associated membrane protein 4 (313 aa).

The tract at residues 1 to 69 is disordered; it reads MAGRSRYDNP…LPPEPADFYN (69 aa). The Cytoplasmic portion of the chain corresponds to 1 to 148; that stretch reads MAGRSRYDNP…EIPVHLQRTQ (148 aa). A coiled-coil region spans residues 85–116; that stretch reads MKTREKELLAKEAELNRREKEIKRREEAAARA. 4 helical membrane passes run 149–169, 181–201, 216–236, and 255–275; these read YVAF…IICV, IWFL…YLWY, FGWF…AAVS, and LIGN…MFCL. The Cytoplasmic portion of the chain corresponds to 276-313; it reads ESLLSMWVIQRVYLYFRGSGKEAEMKREAARSAARAAF.

Belongs to the SCAMP family.

It is found in the cell membrane. It localises to the cytoplasmic vesicle. Its subcellular location is the secretory vesicle membrane. Its function is as follows. Probably involved in membrane trafficking. The chain is Secretory carrier-associated membrane protein 4 (SCAMP4) from Oryza sativa subsp. japonica (Rice).